The chain runs to 158 residues: C-type lectin mannose-binding isoform (158 aa).

Positions 1–20 are cleaved as a signal peptide; it reads MGRFLLVTLSMLVVTFSLNE. Intrachain disulfides connect C26–C37, C54–C154, and C129–C146. The 123-residue stretch at 33-155 folds into the C-type lectin domain; that stretch reads KNGFCYKVFN…CEALYHFICQ (123 aa). A Mannose-binding motif is present at residues 119–121; the sequence is EPN. N-linked (GlcNAc...) asparagine glycosylation occurs at N121. 3 residues coordinate Ca(2+): E127, N142, and D143.

This sequence belongs to the true venom lectin family. As to quaternary structure, homodimer; disulfide-linked. In terms of tissue distribution, expressed by the venom gland.

It is found in the secreted. In terms of biological role, mannose-binding lectin that binds to and agglutinates erythrocytes in a calcium-dependent manner. In Notechis scutatus scutatus (Mainland tiger snake), this protein is C-type lectin mannose-binding isoform.